Here is a 158-residue protein sequence, read N- to C-terminus: NAD(P)H-quinone oxidoreductase subunit J, chloroplastic (158 aa).

Belongs to the complex I 30 kDa subunit family. As to quaternary structure, NDH is composed of at least 16 different subunits, 5 of which are encoded in the nucleus.

It localises to the plastid. It is found in the chloroplast thylakoid membrane. It catalyses the reaction a plastoquinone + NADH + (n+1) H(+)(in) = a plastoquinol + NAD(+) + n H(+)(out). It carries out the reaction a plastoquinone + NADPH + (n+1) H(+)(in) = a plastoquinol + NADP(+) + n H(+)(out). NDH shuttles electrons from NAD(P)H:plastoquinone, via FMN and iron-sulfur (Fe-S) centers, to quinones in the photosynthetic chain and possibly in a chloroplast respiratory chain. The immediate electron acceptor for the enzyme in this species is believed to be plastoquinone. Couples the redox reaction to proton translocation, and thus conserves the redox energy in a proton gradient. The polypeptide is NAD(P)H-quinone oxidoreductase subunit J, chloroplastic (Chloranthus spicatus (Chulantree)).